Here is a 631-residue protein sequence, read N- to C-terminus: Transmembrane and coiled-coil domain-containing protein 4 (631 aa).

Residues 1-27 (MATWNRPHPRQPVAPEPAAEDDSQQPL) are disordered. Residues 156–183 (FLESLKDAKEEESETAEASRKRKEKRRK) are a coiled coil. The next 3 helical transmembrane spans lie at 200–220 (VIGVTGGLAAPLVAAGAATII), 228–248 (LGSVAGIAVMTSLFGAAGAGL), and 343–363 (LSGIVAALTWPASLLSVANVI). The tract at residues 555-595 (DGQSQGPASEDSLKTTIPSSASQAQMPAGLNQSTEDSLSTA) is disordered. A compositionally biased stretch (polar residues) spans 568 to 594 (KTTIPSSASQAQMPAGLNQSTEDSLST).

It belongs to the TMCO4 family.

Its subcellular location is the membrane. The polypeptide is Transmembrane and coiled-coil domain-containing protein 4 (Tmco4) (Mus musculus (Mouse)).